Consider the following 215-residue polypeptide: uncharacterized protein (215 aa).

6 helical membrane passes run 21–40 (IIKYLVIFFLFCIISTVLIN), 50–69 (LIFSVICLLISLIGFSSVIF), 95–117 (FFAIFISSTIGLVFVLPIIYVLF), 122–144 (LEIIFFFSSVWMILVLSSSLVVL), 156–178 (ANFVGTFIMPLLIPNIIMTGLIL), and 183–205 (LQLIFIMIGINLVFLPISFFLSS).

It belongs to the CcmB/CycW/HelB family.

Its subcellular location is the cell membrane. This is an uncharacterized protein from Rickettsia conorii (strain ATCC VR-613 / Malish 7).